The chain runs to 355 residues: Putative [LysW]-L-2-aminoadipate/[LysW]-L-glutamate phosphate reductase (355 aa).

Residue 13-16 (SGMT) coordinates NADP(+). The active site involves Cys-153. Position 323 (Asn-323) interacts with NADP(+).

This sequence belongs to the NAGSA dehydrogenase family. Type 1 subfamily. LysY sub-subfamily.

The protein resides in the cytoplasm. The enzyme catalyses [amino-group carrier protein]-C-terminal-N-(1-carboxy-5-oxopentan-1-yl)-L-glutamine + phosphate + NADP(+) = [amino-group carrier protein]-C-terminal-N-(1-carboxy-5-phosphooxy-5-oxopentan-1-yl)-L-glutamine + NADPH + H(+). The catalysed reaction is [amino-group carrier protein]-C-terminal-gamma-(L-glutamyl-5-semialdehyde)-L-glutamate + phosphate + NADP(+) = [amino-group carrier protein]-C-terminal-gamma-(5-phospho-L-glutamyl)-L-glutamate + NADPH + H(+). It functions in the pathway amino-acid biosynthesis; L-lysine biosynthesis via AAA pathway; L-lysine from L-alpha-aminoadipate (Thermus route): step 3/5. The protein operates within amino-acid biosynthesis; L-arginine biosynthesis. Functionally, involved in both the arginine and lysine biosynthetic pathways. This chain is Putative [LysW]-L-2-aminoadipate/[LysW]-L-glutamate phosphate reductase, found in Aeropyrum pernix (strain ATCC 700893 / DSM 11879 / JCM 9820 / NBRC 100138 / K1).